A 477-amino-acid polypeptide reads, in one-letter code: Argininosuccinate lyase (477 aa).

Belongs to the lyase 1 family. Argininosuccinate lyase subfamily.

It is found in the cytoplasm. The catalysed reaction is 2-(N(omega)-L-arginino)succinate = fumarate + L-arginine. It participates in amino-acid biosynthesis; L-arginine biosynthesis; L-arginine from L-ornithine and carbamoyl phosphate: step 3/3. This chain is Argininosuccinate lyase, found in Acinetobacter baumannii (strain ACICU).